Reading from the N-terminus, the 542-residue chain is Zinc finger protein 280A (542 aa).

The disordered stretch occupies residues 66–185; it reads VTPGSNSRRK…RDSKRVKLRD (120 aa). Polar residues predominate over residues 107 to 122; it reads EGRSTDSPVTMKSSSE. The segment covering 128 to 143 has biased composition (low complexity); sequence SSPQVVSPSSSDSLPP. Positions 161–185 are enriched in basic and acidic residues; sequence SSPDSKRLSTSDINSRDSKRVKLRD. 4 C2H2-type zinc fingers span residues 334–357, 364–387, 423–445, and 451–474; these read TTCQ…DSVH, AVCK…KDHH, LLCL…CWRH, and LQCS…TKDH. Residues 499–520 are compositionally biased toward polar residues; that stretch reads QPGSSGMASVIVSNTDPQSSPV. The tract at residues 499 to 542 is disordered; it reads QPGSSGMASVIVSNTDPQSSPVKTKKKTAMNTRDSRLPCSKDSS.

It localises to the nucleus. Functionally, may function as a transcription factor. In Homo sapiens (Human), this protein is Zinc finger protein 280A (ZNF280A).